Consider the following 86-residue polypeptide: uncharacterized protein (86 aa).

The next 2 membrane-spanning stretches (helical) occupy residues 21–43 and 53–75; these read VFWV…EATA and FWYA…YFYF.

Its subcellular location is the cell membrane. This is an uncharacterized protein from Archaeoglobus fulgidus (strain ATCC 49558 / DSM 4304 / JCM 9628 / NBRC 100126 / VC-16).